Here is a 124-residue protein sequence, read N- to C-terminus: Putative peptidyl-tRNA hydrolase (124 aa).

Belongs to the PTH2 family.

It carries out the reaction an N-acyl-L-alpha-aminoacyl-tRNA + H2O = an N-acyl-L-amino acid + a tRNA + H(+). The protein is Putative peptidyl-tRNA hydrolase of Fowlpox virus (strain NVSL) (FPV).